A 102-amino-acid polypeptide reads, in one-letter code: NADH-quinone oxidoreductase subunit K (102 aa).

3 helical membrane passes run Leu2–Leu22, Ile26–Thr46, and Val58–Ile78.

This sequence belongs to the complex I subunit 4L family. In terms of assembly, NDH-1 is composed of 14 different subunits. Subunits NuoA, H, J, K, L, M, N constitute the membrane sector of the complex.

The protein resides in the cell inner membrane. It catalyses the reaction a quinone + NADH + 5 H(+)(in) = a quinol + NAD(+) + 4 H(+)(out). Functionally, NDH-1 shuttles electrons from NADH, via FMN and iron-sulfur (Fe-S) centers, to quinones in the respiratory chain. The immediate electron acceptor for the enzyme in this species is believed to be ubiquinone. Couples the redox reaction to proton translocation (for every two electrons transferred, four hydrogen ions are translocated across the cytoplasmic membrane), and thus conserves the redox energy in a proton gradient. This chain is NADH-quinone oxidoreductase subunit K, found in Campylobacter fetus subsp. fetus (strain 82-40).